A 239-amino-acid polypeptide reads, in one-letter code: MKKLKLRLTHLWYKLLMKLGLKSDEVYYIGGSEALPPPLSKDEEQVLLMKLPNGDQAARAILIERNLRLVVYIARKFENTGINIEDLISIGTIGLIKAVNTFNPEKKIKLATYASRCIENEILMYLRRNNKIRSEVSFDEPLNIDWDGNELLLSDVLGTDDDIITKDIEANVDKKLLKKALEQLNEREKQIMELRFGLVGEEEKTQKDVADMMGISQSYISRLEKRIIKRLRKEFNKMV.

The propeptide at 1–29 is removed by SpoIIGA; it reads MKKLKLRLTHLWYKLLMKLGLKSDEVYYI. The Polymerase core binding signature appears at 86–99; sequence DLISIGTIGLIKAV. Positions 206-225 form a DNA-binding region, H-T-H motif; it reads QKDVADMMGISQSYISRLEK.

The protein belongs to the sigma-70 factor family. In terms of processing, proteolytically cleaved in the N-terminus by SpoIIGA to yield the active peptide.

In terms of biological role, sigma factors are initiation factors that promote the attachment of RNA polymerase to specific initiation sites and are then released. This sigma factor is responsible for the expression of sporulation specific genes. This chain is RNA polymerase sigma-E factor (sigE), found in Bacillus subtilis (strain 168).